Here is a 267-residue protein sequence, read N- to C-terminus: O-methyltransferase (267 aa).

Positions 100 and 145 each coordinate S-adenosyl-L-methionine.

It belongs to the methyltransferase superfamily.

Its pathway is antifungal biosynthesis. Its function is as follows. O-methyltransferase; part of the gene cluster that mediates the biosynthesis of the tetrahydropyranyl antifungal agent lanomycin that acts as an inhibitor of CYP51 and blocks the ergosterol biosynthesis. The biosynthesis probably begins with the formation of an hexaketide, followed by methionine mediated alkylation of C-2 and C-6, and methylation of the reduced C-3 oxygen, pyran forming reductive ring closure, oxygenation of C-4, beta-keto reduction, enoyl reduction and dehydration of the remaining oxygens, and finally, acylation with glycine to complete the biosynthesis. The chain is O-methyltransferase from Pyrenophora dematioidea (Helminthosporium dematioideum).